We begin with the raw amino-acid sequence, 525 residues long: MFESLSDRLTAALQGLRGKGRLTDADIDATTREIRLALLEADVSLPVVRAFIHRIKERARGAEVSSALNPAQQVVKIVNEELISILGGETRELAFAKTPPTVVMLAGLQGSGKTTLAGKLAARLRGQGHTPLLVACDLQRPAAVNQLQVVGERAGVPVFAPHPGASPESGPGDPVAVAAAGLAEARAKHFDVVIVDTAGRLGIDEELMAQAAAIRDAINPDEVLFVLDAMIGQDAVTTAAAFGEGVGFTGVALTKLDGDARGGAALSVREVTGVPILFASTGEKLEDFDVFHPDRMASRILGMGDVLSLIEQAEQVFDAQQAEEAAAKIGAGELTLEDFLEQMLAVRKMGPIGNLLGMLPGAAQMKDALAEVDDKQLDRVQAIIRGMTPQERADPKIINASRRLRIANGSGVTVSEVNQLVERFFEARKMMSSMLGGMGIPGIGRKSATRKSKGAKGKSGKKSKKGTRGPTPPKVKSPFGVPGMPGLAGLPGGLPDLSQMPKGLDELPPGLADFDLSKLKFPGKK.

Residues 107-114 (GLQGSGKT), 196-200 (DTAGR), and 254-257 (TKLD) each bind GTP. Positions 437-525 (GMGIPGIGRK…LSKLKFPGKK (89 aa)) are disordered. A compositionally biased stretch (basic residues) spans 447–467 (SATRKSKGAKGKSGKKSKKGT). Residues 480-497 (GVPGMPGLAGLPGGLPDL) show a composition bias toward low complexity.

This sequence belongs to the GTP-binding SRP family. SRP54 subfamily. As to quaternary structure, part of the signal recognition particle protein translocation system, which is composed of SRP and FtsY.

The protein localises to the cytoplasm. The enzyme catalyses GTP + H2O = GDP + phosphate + H(+). Its function is as follows. Involved in targeting and insertion of nascent membrane proteins into the cytoplasmic membrane. Binds to the hydrophobic signal sequence of the ribosome-nascent chain (RNC) as it emerges from the ribosomes. The SRP-RNC complex is then targeted to the cytoplasmic membrane where it interacts with the SRP receptor FtsY. The sequence is that of Signal recognition particle protein from Mycobacterium bovis (strain ATCC BAA-935 / AF2122/97).